The chain runs to 328 residues: Diaminopimelate epimerase (328 aa).

Residues asparagine 14 and asparagine 73 each contribute to the substrate site. Cysteine 82 (proton donor) is an active-site residue. Substrate is bound by residues 83-84 (GN), asparagine 170, asparagine 206, and 224-225 (ER). The active-site Proton acceptor is cysteine 233. Substrate is bound at residue 234–235 (GT).

The protein belongs to the diaminopimelate epimerase family. As to quaternary structure, homodimer.

The protein resides in the cytoplasm. The catalysed reaction is (2S,6S)-2,6-diaminopimelate = meso-2,6-diaminopimelate. It participates in amino-acid biosynthesis; L-lysine biosynthesis via DAP pathway; DL-2,6-diaminopimelate from LL-2,6-diaminopimelate: step 1/1. Catalyzes the stereoinversion of LL-2,6-diaminopimelate (L,L-DAP) to meso-diaminopimelate (meso-DAP), a precursor of L-lysine and an essential component of the bacterial peptidoglycan. The chain is Diaminopimelate epimerase from Listeria welshimeri serovar 6b (strain ATCC 35897 / DSM 20650 / CCUG 15529 / CIP 8149 / NCTC 11857 / SLCC 5334 / V8).